The sequence spans 348 residues: MPPRIPNAPSSLLLQSSACSGSSSRCTASRLPTWASSCSSSSPQSSQPTTHQQQCSSFSTTAPAHVQSVRRQKMFSWLDKKGSAYKEHTRQGPNLLGGQGKDGLAVPFPNNPYFKSQPVLSEGSREIIYQDVMEKGLPIKAVSAKYNVDVRRVAAVIRLKEIEKRWIKEYKPLARPYARAVMKMLPQTVLGGPDQKPHESINDVHVHSYTTQQLFVPVSESREFTREDAAKAFGDHILPVDKKLRVPELIEFQKDLLKEVPLQEANRKFLNATAASEAKIAEREAKRRQAVEDAITRVKTDRFEFRFQEFNAENVGHDGRDRNAVGWRYGVPFPDRKRSQIKIPTKVE.

Residues 37-57 show a composition bias toward low complexity; it reads SCSSSSPQSSQPTTHQQQCSS. Residues 37 to 63 are disordered; that stretch reads SCSSSSPQSSQPTTHQQQCSSFSTTAP.

The protein belongs to the mitochondrion-specific ribosomal protein mS45 family. In terms of assembly, component of the mitochondrial small ribosomal subunit (mt-SSU). Mature N.crassa 74S mitochondrial ribosomes consist of a small (37S) and a large (54S) subunit. The 37S small subunit contains a 16S ribosomal RNA (16S mt-rRNA) and 32 different proteins. The 54S large subunit contains a 23S rRNA (23S mt-rRNA) and 42 different proteins.

It is found in the mitochondrion. Functionally, component of the mitochondrial ribosome (mitoribosome), a dedicated translation machinery responsible for the synthesis of mitochondrial genome-encoded proteins, including at least some of the essential transmembrane subunits of the mitochondrial respiratory chain. The mitoribosomes are attached to the mitochondrial inner membrane and translation products are cotranslationally integrated into the membrane. The chain is Small ribosomal subunit protein mS45 (mrps35) from Neurospora crassa (strain ATCC 24698 / 74-OR23-1A / CBS 708.71 / DSM 1257 / FGSC 987).